A 125-amino-acid polypeptide reads, in one-letter code: Interferon-induced transmembrane protein 1 (125 aa).

Residues Met-1–His-36 are Cytoplasmic-facing. Ser-16 carries the post-translational modification Phosphoserine. Positions Val-37–Phe-57 form an intramembrane region, helical. 3 S-palmitoyl cysteine lipidation sites follow: Cys-50, Cys-51, and Cys-84. Over Ala-58–Asn-86 the chain is Cytoplasmic. The tract at residues Cys-84 to Tyr-125 is interaction with CAV1. A helical transmembrane segment spans residues Ile-87–Gly-107. Over Ser-108–Tyr-125 the chain is Extracellular.

This sequence belongs to the CD225/Dispanin family. In terms of assembly, interacts with CD81. Part of a complex composed of CD19, CR2/CD21, CD81 and IFITM1/CD225 in the membrane of mature B-cells. Interacts with CAV1; this interaction enhances the ability of CAV1 in inhibiting ERK activation. In terms of processing, palmitoylation on membrane-proximal cysteines controls clustering in membrane compartments and antiviral activity. As to expression, bone (at protein level). Levels greatly elevated in colon cancer, cervical cancer, esophageal cancer and ovarian cancer. Expressed in glioma cell lines.

It is found in the cell membrane. The protein resides in the lysosome membrane. Functionally, IFN-induced antiviral protein which inhibits the entry of viruses to the host cell cytoplasm, permitting endocytosis, but preventing subsequent viral fusion and release of viral contents into the cytosol. Active against multiple viruses, including influenza A virus, SARS coronaviruses (SARS-CoV and SARS-CoV-2), Marburg virus (MARV), Ebola virus (EBOV), Dengue virus (DNV), West Nile virus (WNV), human immunodeficiency virus type 1 (HIV-1) and hepatitis C virus (HCV). Can inhibit: influenza virus hemagglutinin protein-mediated viral entry, MARV and EBOV GP1,2-mediated viral entry and SARS-CoV and SARS-CoV-2 S protein-mediated viral entry. Also implicated in cell adhesion and control of cell growth and migration. Inhibits SARS-CoV-2 S protein-mediated syncytia formation. Plays a key role in the antiproliferative action of IFN-gamma either by inhibiting the ERK activation or by arresting cell growth in G1 phase in a p53-dependent manner. Acts as a positive regulator of osteoblast differentiation. In hepatocytes, IFITM proteins act in a coordinated manner to restrict HCV infection by targeting the endocytosed HCV virion for lysosomal degradation. IFITM2 and IFITM3 display anti-HCV activity that may complement the anti-HCV activity of IFITM1 by inhibiting the late stages of HCV entry, possibly in a coordinated manner by trapping the virion in the endosomal pathway and targeting it for degradation at the lysosome. The polypeptide is Interferon-induced transmembrane protein 1 (Homo sapiens (Human)).